The sequence spans 103 residues: Large ribosomal subunit protein bL21 (103 aa).

This sequence belongs to the bacterial ribosomal protein bL21 family. In terms of assembly, part of the 50S ribosomal subunit. Contacts protein L20.

Functionally, this protein binds to 23S rRNA in the presence of protein L20. This Clostridium kluyveri (strain NBRC 12016) protein is Large ribosomal subunit protein bL21.